The following is a 175-amino-acid chain: Glutamyl-tRNA(Gln) amidotransferase subunit F, mitochondrial (175 aa).

Residues 1–19 (MLKVSARHAPVLRLPRRFY) constitute a mitochondrion transit peptide.

It belongs to the GatF family. As to quaternary structure, subunit of the heterotrimeric GatFAB amidotransferase (AdT) complex, composed of A, B and F subunits.

The protein localises to the mitochondrion inner membrane. It carries out the reaction L-glutamyl-tRNA(Gln) + L-glutamine + ATP + H2O = L-glutaminyl-tRNA(Gln) + L-glutamate + ADP + phosphate + H(+). Allows the formation of correctly charged Gln-tRNA(Gln) through the transamidation of misacylated Glu-tRNA(Gln) in the mitochondria. The reaction takes place in the presence of glutamine and ATP through an activated gamma-phospho-Glu-tRNA(Gln). Required for proper protein synthesis within the mitochondrion. The protein is Glutamyl-tRNA(Gln) amidotransferase subunit F, mitochondrial of Lachancea thermotolerans (strain ATCC 56472 / CBS 6340 / NRRL Y-8284) (Yeast).